The sequence spans 510 residues: GMP synthase [glutamine-hydrolyzing] (510 aa).

Residues 5–195 enclose the Glutamine amidotransferase type-1 domain; it reads MIVVLDFGSQ…VFEVCGCRGD (191 aa). Cysteine 82 (nucleophile) is an active-site residue. Active-site residues include histidine 169 and glutamate 171. The 190-residue stretch at 196–385 folds into the GMPS ATP-PPase domain; it reads WTMENFIDEQ…LGIPDEIVWR (190 aa). Position 223 to 229 (223 to 229) interacts with ATP; sequence SGGVDSS.

In terms of assembly, homodimer.

It carries out the reaction XMP + L-glutamine + ATP + H2O = GMP + L-glutamate + AMP + diphosphate + 2 H(+). It participates in purine metabolism; GMP biosynthesis; GMP from XMP (L-Gln route): step 1/1. Functionally, catalyzes the synthesis of GMP from XMP. This Geobacillus kaustophilus (strain HTA426) protein is GMP synthase [glutamine-hydrolyzing].